A 310-amino-acid polypeptide reads, in one-letter code: Putative S-adenosyl-L-methionine-dependent methyltransferase MUL_2766 (310 aa).

S-adenosyl-L-methionine is bound by residues Asp131 and 160-161; that span reads DL.

This sequence belongs to the UPF0677 family.

In terms of biological role, exhibits S-adenosyl-L-methionine-dependent methyltransferase activity. The polypeptide is Putative S-adenosyl-L-methionine-dependent methyltransferase MUL_2766 (Mycobacterium ulcerans (strain Agy99)).